The chain runs to 700 residues: Myotubularin-related protein 11 (700 aa).

The tract at residues 1–39 (MWWGGRGQSFNIAPQKEEPEMGLSGPKSNPGNRMPEPSS) is disordered. A Myotubularin phosphatase domain is found at 201–644 (LETLEDWETE…PQIRFWKRCY (444 aa)).

This sequence belongs to the protein-tyrosine phosphatase family. Non-receptor class myotubularin subfamily.

This chain is Myotubularin-related protein 11 (Mtmr11), found in Mus musculus (Mouse).